The following is a 103-amino-acid chain: Small ribosomal subunit protein uS10 (103 aa).

This sequence belongs to the universal ribosomal protein uS10 family. In terms of assembly, part of the 30S ribosomal subunit.

In terms of biological role, involved in the binding of tRNA to the ribosomes. The sequence is that of Small ribosomal subunit protein uS10 from Vibrio cholerae serotype O1 (strain ATCC 39541 / Classical Ogawa 395 / O395).